The sequence spans 280 residues: Pantothenate synthetase (280 aa).

26–33 (MGNLHEGH) lines the ATP pocket. The active-site Proton donor is His-33. Gln-57 contributes to the (R)-pantoate binding site. Residue Gln-57 coordinates beta-alanine. 145–148 (GKKD) contributes to the ATP binding site. Gln-151 is a (R)-pantoate binding site. Residues Val-174 and 182 to 185 (LSSR) each bind ATP.

It belongs to the pantothenate synthetase family. Homodimer.

It localises to the cytoplasm. It carries out the reaction (R)-pantoate + beta-alanine + ATP = (R)-pantothenate + AMP + diphosphate + H(+). The protein operates within cofactor biosynthesis; (R)-pantothenate biosynthesis; (R)-pantothenate from (R)-pantoate and beta-alanine: step 1/1. Functionally, catalyzes the condensation of pantoate with beta-alanine in an ATP-dependent reaction via a pantoyl-adenylate intermediate. The sequence is that of Pantothenate synthetase from Bordetella avium (strain 197N).